Consider the following 354-residue polypeptide: GTPase Obg (354 aa).

The 159-residue stretch at 1 to 159 (MKFVDEVKIH…RDLVLELKLL (159 aa)) folds into the Obg domain. Positions 160–333 (ADVGIVGYPN…LLDAVGRALF (174 aa)) constitute an OBG-type G domain. Residues 166–173 (GYPNAGKS), 191–195 (FTTLT), 212–215 (DIPG), 283–286 (TKID), and 314–316 (SAV) each bind GTP. The Mg(2+) site is built by Ser173 and Thr193.

Belongs to the TRAFAC class OBG-HflX-like GTPase superfamily. OBG GTPase family. Monomer. Mg(2+) is required as a cofactor.

It localises to the cytoplasm. An essential GTPase which binds GTP, GDP and possibly (p)ppGpp with moderate affinity, with high nucleotide exchange rates and a fairly low GTP hydrolysis rate. Plays a role in control of the cell cycle, stress response, ribosome biogenesis and in those bacteria that undergo differentiation, in morphogenesis control. The chain is GTPase Obg from Anaeromyxobacter dehalogenans (strain 2CP-1 / ATCC BAA-258).